The chain runs to 488 residues: Ribulose bisphosphate carboxylase large chain (488 aa).

Residues asparagine 127 and threonine 177 each coordinate substrate. The active-site Proton acceptor is lysine 179. Lysine 181 is a substrate binding site. The Mg(2+) site is built by lysine 205, aspartate 207, and glutamate 208. N6-carboxylysine is present on lysine 205. Catalysis depends on histidine 297, which acts as the Proton acceptor. Substrate is bound by residues arginine 298, histidine 330, and serine 382.

The protein belongs to the RuBisCO large chain family. Type I subfamily. As to quaternary structure, heterohexadecamer of 8 large chains and 8 small chains. Mg(2+) serves as cofactor.

The protein localises to the plastid. It localises to the chloroplast. It carries out the reaction 2 (2R)-3-phosphoglycerate + 2 H(+) = D-ribulose 1,5-bisphosphate + CO2 + H2O. It catalyses the reaction D-ribulose 1,5-bisphosphate + O2 = 2-phosphoglycolate + (2R)-3-phosphoglycerate + 2 H(+). In terms of biological role, ruBisCO catalyzes two reactions: the carboxylation of D-ribulose 1,5-bisphosphate, the primary event in carbon dioxide fixation, as well as the oxidative fragmentation of the pentose substrate in the photorespiration process. Both reactions occur simultaneously and in competition at the same active site. This is Ribulose bisphosphate carboxylase large chain from Cyanidium caldarium (Red alga).